The primary structure comprises 51 residues: Large ribosomal subunit protein eL39z (51 aa).

This sequence belongs to the eukaryotic ribosomal protein eL39 family.

The protein is Large ribosomal subunit protein eL39z (RPL39A) of Oryza sativa subsp. japonica (Rice).